A 545-amino-acid polypeptide reads, in one-letter code: Endo-beta-N-acetylglucosaminidase (545 aa).

A signal peptide spans 1 to 36 (MTFIKQMMPRYVASMTAGIVAAAMAATCAFAPVANA). The region spanning 51–333 (RHFMVYYRAW…EDLRRIVPSN (283 aa)) is the GH18 domain. The active-site Proton donor is Glu184. The interval 486–511 (PVPTPDSTDQNGNRDKVTNHKVQGQP) is disordered. The chain crosses the membrane as a helical span at residues 518–538 (GISTDIIVAVGVTLAIAGVAL).

Belongs to the glycosyl hydrolase 18 family.

It localises to the cell membrane. It carries out the reaction an N(4)-(oligosaccharide-(1-&gt;3)-[oligosaccharide-(1-&gt;6)]-beta-D-Man-(1-&gt;4)-beta-D-GlcNAc-(1-&gt;4)-alpha-D-GlcNAc)-L-asparaginyl-[protein] + H2O = an oligosaccharide-(1-&gt;3)-[oligosaccharide-(1-&gt;6)]-beta-D-Man-(1-&gt;4)-D-GlcNAc + N(4)-(N-acetyl-beta-D-glucosaminyl)-L-asparaginyl-[protein]. Its function is as follows. Endoglycosidase with broad specificity that cleaves the chitobiose core of high mannose and complex N-linked glycans. Is able to release N-glycans from diverse host glycoproteins such as human and bovine lactoferrin, immunoglobulins A and G, and ribonuclease B. Is active directly on human breast milk - a complex matrix of lipids, oligosaccharides, and proteins with disparate glycosylation types - successfully removing a significant proportion of the total amount of N-glycans. Does not recognize O-linked glycans or free human milk oligosaccharides (HMO). The chain is Endo-beta-N-acetylglucosaminidase from Bifidobacterium longum subsp. infantis (strain ATCC 15697 / DSM 20088 / JCM 1222 / NCTC 11817 / S12).